A 437-amino-acid chain; its full sequence is Eukaryotic peptide chain release factor subunit 1 (437 aa).

At alanine 2 the chain carries N-acetylalanine. The short motif at 61-64 (NIKS) is the NIKS motif; plays an important role in translational termination element. Position 63 is a 4-hydroxylysine (lysine 63). Residue lysine 87 forms a Glycyl lysine isopeptide (Lys-Gly) (interchain with G-Cter in SUMO2) linkage. N5-methylglutamine is present on glutamine 185. A Glycyl lysine isopeptide (Lys-Gly) (interchain with G-Cter in ubiquitin) cross-link involves residue lysine 279. Threonine 347 is subject to Phosphothreonine. Lysine 404 is covalently cross-linked (Glycyl lysine isopeptide (Lys-Gly) (interchain with G-Cter in SUMO2)).

It belongs to the eukaryotic release factor 1 family. Component of the eRF1-eRF3-GTP ternary complex, composed of ETF1/ERF1 and eRF3 (GSPT1/ERF3A or GSPT2/ERF3B) and GTP. Component of the transient SURF (SMG1-UPF1-eRF1-eRF3) complex. Interacts with JMJD4. The ETF1-GSPT1 complex interacts with JMJD4. Hydroxylation at Lys-63 by JMJD4 promotes its translational termination efficiency. In terms of processing, methylated at Gln-185 by N6AMT1. Post-translationally, ubiquitinated at Lys-279 via 'Lys-6'-linked polyubiquitin chains by RNF14 and RNF25 in response to ribosome collisions (ribosome stalling), leading to its degradation by the proteasome and rescue of stalled ribosomes.

The protein localises to the cytoplasm. Component of the eRF1-eRF3-GTP ternary complex, a ternary complex that mediates translation termination in response to the termination codons. The eRF1-eRF3-GTP complex binds to a stop codon in the ribosomal A-site. ETF1/ERF1 is responsible for stop codon recognition and inducing hydrolysis of peptidyl-tRNA. Following GTP hydrolysis, eRF3 (GSPT1/ERF3A or GSPT2/ERF3B) dissociates, permitting ETF1/eRF1 to accommodate fully in the A-site, followed by hydrolysis of peptidyl-tRNA. Component of the transient SURF complex which recruits UPF1 to stalled ribosomes in the context of nonsense-mediated decay (NMD) of mRNAs containing premature stop codons. Required for SHFL-mediated translation termination which inhibits programmed ribosomal frameshifting (-1PRF) of mRNA from viruses and cellular genes. This Bos taurus (Bovine) protein is Eukaryotic peptide chain release factor subunit 1 (ETF1).